A 729-amino-acid polypeptide reads, in one-letter code: Fatty acid oxidation complex subunit alpha (729 aa).

The tract at residues 1–189 (MLYKGDTLYL…KIGLVDGVVK (189 aa)) is enoyl-CoA hydratase/isomerase. Substrate is bound at residue Asp296. The 3-hydroxyacyl-CoA dehydrogenase stretch occupies residues 311-729 (ETPKQAAVLG…ARPVGDLKTA (419 aa)). Residues Met324, Asp343, 400–402 (IVE), Lys407, and Ser429 contribute to the NAD(+) site. The active-site For 3-hydroxyacyl-CoA dehydrogenase activity is the His450. Position 453 (Asn453) interacts with NAD(+). 2 residues coordinate substrate: Asn500 and Tyr660. Positions 708 to 729 (RHNEPYYPPVEPARPVGDLKTA) are disordered.

It in the N-terminal section; belongs to the enoyl-CoA hydratase/isomerase family. The protein in the C-terminal section; belongs to the 3-hydroxyacyl-CoA dehydrogenase family. In terms of assembly, heterotetramer of two alpha chains (FadB) and two beta chains (FadA).

The catalysed reaction is a (3S)-3-hydroxyacyl-CoA + NAD(+) = a 3-oxoacyl-CoA + NADH + H(+). It catalyses the reaction a (3S)-3-hydroxyacyl-CoA = a (2E)-enoyl-CoA + H2O. The enzyme catalyses a 4-saturated-(3S)-3-hydroxyacyl-CoA = a (3E)-enoyl-CoA + H2O. It carries out the reaction (3S)-3-hydroxybutanoyl-CoA = (3R)-3-hydroxybutanoyl-CoA. The catalysed reaction is a (3Z)-enoyl-CoA = a 4-saturated (2E)-enoyl-CoA. It catalyses the reaction a (3E)-enoyl-CoA = a 4-saturated (2E)-enoyl-CoA. It functions in the pathway lipid metabolism; fatty acid beta-oxidation. Its function is as follows. Involved in the aerobic and anaerobic degradation of long-chain fatty acids via beta-oxidation cycle. Catalyzes the formation of 3-oxoacyl-CoA from enoyl-CoA via L-3-hydroxyacyl-CoA. It can also use D-3-hydroxyacyl-CoA and cis-3-enoyl-CoA as substrate. This Escherichia coli O157:H7 protein is Fatty acid oxidation complex subunit alpha.